We begin with the raw amino-acid sequence, 75 residues long: DNA-directed RNA polymerase subunit Rpo6 (75 aa).

The protein belongs to the archaeal Rpo6/eukaryotic RPB6 RNA polymerase subunit family. As to quaternary structure, part of the RNA polymerase complex.

Its subcellular location is the cytoplasm. The catalysed reaction is RNA(n) + a ribonucleoside 5'-triphosphate = RNA(n+1) + diphosphate. Its function is as follows. DNA-dependent RNA polymerase (RNAP) catalyzes the transcription of DNA into RNA using the four ribonucleoside triphosphates as substrates. The chain is DNA-directed RNA polymerase subunit Rpo6 from Archaeoglobus fulgidus (strain ATCC 49558 / DSM 4304 / JCM 9628 / NBRC 100126 / VC-16).